The primary structure comprises 244 residues: Ethylene-responsive transcription factor ERF013 (244 aa).

The interval 1-33 (MVKQELKIQVTTSSSSLSHSSSSSSSSTSALRH) is disordered. Low complexity predominate over residues 11–29 (TTSSSSLSHSSSSSSSSTS). Residues 42-99 (KYKGVRMRSWGSWVTEIRAPNQKTRIWLGSYSTAEAAARAYDAALLCLKGPKANLNFP) constitute a DNA-binding region (AP2/ERF). Residues 123–178 (QKVAAQAANSSSDHFTPPSDENDHDHDDGLDHHPSASSSAASSPPDDDHHNDDDGD) form a disordered region. The segment covering 143–156 (ENDHDHDDGLDHHP) has biased composition (basic and acidic residues). The span at 157–166 (SASSSAASSP) shows a compositional bias: low complexity.

Belongs to the AP2/ERF transcription factor family. ERF subfamily.

The protein resides in the nucleus. Its function is as follows. Probably acts as a transcriptional activator. Binds to the GCC-box pathogenesis-related promoter element. May be involved in the regulation of gene expression by stress factors and by components of stress signal transduction pathways. The chain is Ethylene-responsive transcription factor ERF013 (ERF013) from Arabidopsis thaliana (Mouse-ear cress).